Reading from the N-terminus, the 248-residue chain is Probable transcriptional regulatory protein Ecaj_0351 (248 aa).

Residues 1 to 21 (MAGHSQFANIKHRKGAQDAKR) are disordered.

It belongs to the TACO1 family.

Its subcellular location is the cytoplasm. This chain is Probable transcriptional regulatory protein Ecaj_0351, found in Ehrlichia canis (strain Jake).